The primary structure comprises 349 residues: Homeobox protein engrailed (349 aa).

Disordered stretches follow at residues 26–53 (DGPS…SPLS), 146–210 (GKET…PLPP), 228–252 (PSSG…EKRP), and 327–349 (STIP…ARIE). Composition is skewed to basic and acidic residues over residues 173 to 188 (QMKK…RTES) and 242 to 252 (DKAITPDEKRP). The homeobox DNA-binding region spans 249 to 308 (EKRPRTAFTAEQLSRLKHEFNENRYLTERRRQDLARELGLHENQIKIWFQNNRAKLKKSS).

Belongs to the engrailed homeobox family.

It is found in the nucleus. In Artemia franciscana (Brine shrimp), this protein is Homeobox protein engrailed.